Consider the following 686-residue polypeptide: Disintegrin and metalloproteinase domain-containing protein 17 homolog (686 aa).

The first 21 residues, 1–21 (MKIQDRSLLIFLVLGILKSDA), serve as a signal peptide directing secretion. The propeptide occupies 22–177 (FNTRVKRHAP…RRAIAIPSDR (156 aa)). 3 N-linked (GlcNAc...) asparagine glycosylation sites follow: asparagine 59, asparagine 206, and asparagine 262. Topologically, residues 178-637 (RKDVLNVKRN…TGGVLEFIKT (460 aa)) are extracellular. Residues 187–445 (NRCTLKLVAD…KWESCFQEEM (259 aa)) enclose the Peptidase M12B domain. Cystine bridges form between cysteine 328–cysteine 440 and cysteine 394–cysteine 424. Histidine 370 lines the Zn(2+) pocket. Residue glutamate 371 is part of the active site. Positions 374 and 380 each coordinate Zn(2+). The Disintegrin domain occupies 446-535 (TSFCGNGIVE…ECPSAPPVRD (90 aa)). Asparagine 501 carries N-linked (GlcNAc...) asparagine glycosylation. Cysteine 506 and cysteine 527 form a disulfide bridge. N-linked (GlcNAc...) asparagine glycosylation occurs at asparagine 581. A helical membrane pass occupies residues 638–658 (HIVVIAIIFFTLIFVGIYKIV). Topologically, residues 659-686 (KYGENFTEKVTHKTAGGCRSVFVKADVN) are cytoplasmic.

Requires Zn(2+) as cofactor.

It localises to the cell membrane. Its function is as follows. Metalloprotease. Acts together with protease sup-17 to facilitate lin-12/Notch signaling during developmental cell fate decision, including anchor cell/ventral uterine precursor cell decision. By modulating glp-1/Notch signaling, plays a role in germline development. In Caenorhabditis elegans, this protein is Disintegrin and metalloproteinase domain-containing protein 17 homolog.